A 100-amino-acid polypeptide reads, in one-letter code: Succinate dehydrogenase assembly factor 4, mitochondrial (100 aa).

A mitochondrion-targeting transit peptide spans 1-31; that stretch reads MFNRNLRAVILKNYNKALTRCLHDAGNLKRP. The interval 24–100 is disordered; it reads DAGNLKRPTP…YSYEGRVTDF (77 aa). 2 stretches are compositionally biased toward basic and acidic residues: residues 36–68 and 85–100; these read LPKE…KDFE and PTVH…VTDF.

Belongs to the SDHAF4 family. As to quaternary structure, interacts with sdh1 in its FAD-bound form.

It localises to the mitochondrion matrix. In terms of biological role, plays an essential role in the assembly of succinate dehydrogenase (SDH), an enzyme complex (also referred to as respiratory complex II) that is a component of both the tricarboxylic acid (TCA) cycle and the mitochondrial electron transport chain, and which couples the oxidation of succinate to fumarate with the reduction of ubiquinone (coenzyme Q) to ubiquinol. Binds to the flavoprotein subunit sdh1 in its FAD-bound form, blocking the generation of excess reactive oxygen species (ROS) and facilitating its assembly with the iron-sulfur protein subunit sdh2 into the SDH catalytic dimer. This Schizosaccharomyces pombe (strain 972 / ATCC 24843) (Fission yeast) protein is Succinate dehydrogenase assembly factor 4, mitochondrial.